A 362-amino-acid polypeptide reads, in one-letter code: Dihydroorotate dehydrogenase (quinone) (362 aa).

FMN-binding positions include 62–66 and threonine 86; that span reads AGYDK. A substrate-binding site is contributed by lysine 66. 111 to 115 contributes to the substrate binding site; sequence NRLGF. FMN-binding residues include asparagine 139 and asparagine 170. Asparagine 170 is a binding site for substrate. Residue serine 173 is the Nucleophile of the active site. Asparagine 175 serves as a coordination point for substrate. Lysine 215 and serine 243 together coordinate FMN. Position 244–245 (244–245) interacts with substrate; that stretch reads NT. FMN contacts are provided by residues glycine 266, glycine 295, and 316-317; that span reads YS.

Belongs to the dihydroorotate dehydrogenase family. Type 2 subfamily. In terms of assembly, monomer. FMN is required as a cofactor.

The protein localises to the cell membrane. It carries out the reaction (S)-dihydroorotate + a quinone = orotate + a quinol. Its pathway is pyrimidine metabolism; UMP biosynthesis via de novo pathway; orotate from (S)-dihydroorotate (quinone route): step 1/1. Catalyzes the conversion of dihydroorotate to orotate with quinone as electron acceptor. In Rhizobium etli (strain CIAT 652), this protein is Dihydroorotate dehydrogenase (quinone).